We begin with the raw amino-acid sequence, 330 residues long: Formylaminopyrimidine-binding protein (330 aa).

The first 18 residues, methionine 1–serine 18, serve as a signal peptide directing secretion. Cysteine 19 carries the N-palmitoyl cysteine lipid modification. Cysteine 19 is lipidated: S-diacylglycerol cysteine. Residues aspartate 38 to tryptophan 39, tyrosine 90, asparagine 145, tyrosine 188, and glutamate 192 contribute to the substrate site.

Belongs to the NMT1 family. As to quaternary structure, the complex is likely composed of an ATP-binding protein (ThiZ), a transmembrane protein (ThiX) and a solute-binding protein (ThiY).

Its subcellular location is the cell membrane. The protein operates within cofactor biosynthesis; thiamine diphosphate biosynthesis. Its function is as follows. Participates in a thiamine pyrimidine salvage pathway as part of the ABC transporter complex ThiXYZ involved in the import of thiamine degradation products. Binds the formylaminopyrimidine N-formyl-4-amino-5-aminomethyl-2-methylpyrimidine (FAMP). Does not bind thiamine. In Halalkalibacterium halodurans (strain ATCC BAA-125 / DSM 18197 / FERM 7344 / JCM 9153 / C-125) (Bacillus halodurans), this protein is Formylaminopyrimidine-binding protein.